The primary structure comprises 591 residues: Serine/threonine-protein phosphatase PP2A 65 kDa regulatory subunit (591 aa).

Alanine 2 bears the N-acetylalanine mark. HEAT repeat units follow at residues 10-48 (DSLY…GEER), 49-86 (TRSE…GGPE), 87-125 (FAMY…SAQD), 126-163 (LEIH…VTQP), 164-202 (VKAE…ETEY), 203-241 (LKSD…PQDD), 242-280 (VEHL…GPEI), 281-323 (TRVD…QVQI), 324-362 (ILSS…GAYQ), 363-401 (TVEQ…GIQQ), 402-440 (LSQS…GQEF), 441-479 (FDQK…GAPW), 480-518 (AEQA…GTDI), 519-557 (TTKL…EASV), and 558-591 (IDAQ…IAAA).

This sequence belongs to the phosphatase 2A regulatory subunit A family. In terms of assembly, PP2A exists in several trimeric forms, all of which consist of a core composed of a catalytic subunit associated with a 65 kDa regulatory subunit (PR65) (subunit A). The core complex associates with a third, variable subunit (subunit B), which confers distinct properties to the holoenzyme. Interacts with the inorganic phosphate transporter PXo (CG10483). Component of the Integrator-PP2A (INTAC) complex, composed of the Integrator core complex and protein phosphatase 2A subunits mts/PP2A and Pp2A-29B. In terms of tissue distribution, expression varies in tissues throughout development. Highly distributed expression in early embryos. In late embryonal development, found at high levels in nervous system and gonads. In third instar larvae, found in brain, imaginal disks and salivary glands.

It is found in the nucleus. The PR65 subunit of protein phosphatase 2A serves as a scaffolding molecule to coordinate the assembly of the catalytic subunit and a variable regulatory B subunit. Key mediator of a quality checkpoint during transcription elongation as part of the Integrator-PP2A (INTAC) complex. The INTAC complex drives premature transcription termination of transcripts that are unfavorably configured for transcriptional elongation: within the INTAC complex, acts as a scaffolding subunit for mts/PP2A, which catalyzes dephosphorylation of the C-terminal domain (CTD) of Pol II subunit POLR2A/RPB1 and Spt5, thereby preventing transcriptional elongation. This is Serine/threonine-protein phosphatase PP2A 65 kDa regulatory subunit (Pp2A-29B) from Drosophila melanogaster (Fruit fly).